The sequence spans 268 residues: Interleukin-1 alpha (268 aa).

The propeptide occupies 1–112; the sequence is MAKVPDLFED…DTEEEIIKPR (112 aa). K82 carries the N6-acetyllysine modification. The nuclear localization signal (NLS) stretch occupies residues 82–86; it reads KKRRL. The residue at position 87 (S87) is a Phosphoserine. N-linked (GlcNAc...) asparagine glycans are attached at residues N102 and N141.

The protein belongs to the IL-1 family. Monomer. Interacts with TMED10; the interaction mediates the translocation from the cytoplasm into the ERGIC (endoplasmic reticulum-Golgi intermediate compartment) and thereby secretion. Interacts with IL1R1. Interacts with S100A13; this interaction is the first step in the export of IL1A, followed by direct translocation of this complex across the plasma membrane. In terms of processing, acetylated within its nuclear localization sequence, which impacts subcellular localization. Proteolytic processed by CAPN1 in a calcium-dependent manner. Cleavage from 31 kDa precursor to 18 kDa biologically active molecules. Post-translationally, phosphorylated. Phosphorylation greatly enhances susceptibility to digestion and promotes the conversion of pre-IL1A alpha to the biologically active IL1A.

The protein localises to the nucleus. The protein resides in the cytoplasm. It is found in the secreted. Cytokine constitutively present intracellularly in nearly all resting non-hematopoietic cells that plays an important role in inflammation and bridges the innate and adaptive immune systems. After binding to its receptor IL1R1 together with its accessory protein IL1RAP, forms the high affinity interleukin-1 receptor complex. Signaling involves the recruitment of adapter molecules such as MYD88, IRAK1 or IRAK4. In turn, mediates the activation of NF-kappa-B and the three MAPK pathways p38, p42/p44 and JNK pathways. Within the cell, acts as an alarmin and cell death results in its liberation in the extracellular space after disruption of the cell membrane to induce inflammation and alert the host to injury or damage. In addition to its role as a danger signal, which occurs when the cytokine is passively released by cell necrosis, directly senses DNA damage and acts as signal for genotoxic stress without loss of cell integrity. The sequence is that of Interleukin-1 alpha (IL1A) from Capra hircus (Goat).